A 305-amino-acid chain; its full sequence is Carbamate kinase (305 aa).

It belongs to the carbamate kinase family.

Its subcellular location is the cytoplasm. The enzyme catalyses hydrogencarbonate + NH4(+) + ATP = carbamoyl phosphate + ADP + H2O + H(+). Its pathway is metabolic intermediate metabolism; carbamoyl phosphate degradation; CO(2) and NH(3) from carbamoyl phosphate: step 1/1. This is Carbamate kinase (arcC) from Thermoplasma acidophilum (strain ATCC 25905 / DSM 1728 / JCM 9062 / NBRC 15155 / AMRC-C165).